Reading from the N-terminus, the 308-residue chain is D-alanine--D-alanine ligase (308 aa).

Residues 100-295 enclose the ATP-grasp domain; that stretch reads KEVFVRNGLP…FDGLIGRLIE (196 aa). Residue 127–180 coordinates ATP; it reads PFAFPAFIKSNNGGSSLALHRVSCPGELARALDELFTRGGEAIIEPAVEGVEVT. Positions 249, 262, and 264 each coordinate Mg(2+).

Belongs to the D-alanine--D-alanine ligase family. Requires Mg(2+) as cofactor. Mn(2+) serves as cofactor.

Its subcellular location is the cytoplasm. The catalysed reaction is 2 D-alanine + ATP = D-alanyl-D-alanine + ADP + phosphate + H(+). Its pathway is cell wall biogenesis; peptidoglycan biosynthesis. In terms of biological role, cell wall formation. This Oleidesulfovibrio alaskensis (strain ATCC BAA-1058 / DSM 17464 / G20) (Desulfovibrio alaskensis) protein is D-alanine--D-alanine ligase.